The sequence spans 375 residues: AA9 family lytic polysaccharide monooxygenase CEL1 (375 aa).

The N-terminal stretch at 1–16 (MLFPALALLCPVLVAA) is a signal peptide. His119 lines the Cu(2+) pocket. A disulfide bridge links Cys130 with Cys135. Residue Asn132 is glycosylated (N-linked (GlcNAc...) asparagine). O2 is bound at residue His196. Residue Asn197 is glycosylated (N-linked (GlcNAc...) asparagine). Tyr212 provides a ligand contact to Cu(2+). Cysteines 232 and 237 form a disulfide. The tract at residues 287 to 375 (NGMSSSPSSS…RSRVAHLDRH (89 aa)) is disordered. Residues 290–341 (SSSPSSSSGVSSSSSSSVASSDTSDSTTSSGVVAVNVSAASSPSSSISANSA) show a composition bias toward low complexity. A glycan (N-linked (GlcNAc...) asparagine) is linked at Asn325. Residues 347-369 (KTCKRKKRSKIAGQKRHIHRSRV) show a composition bias toward basic residues.

It belongs to the polysaccharide monooxygenase AA9 family. The cofactor is Cu(2+).

The protein resides in the secreted. Its subcellular location is the cell wall. It carries out the reaction [(1-&gt;4)-beta-D-glucosyl]n+m + reduced acceptor + O2 = 4-dehydro-beta-D-glucosyl-[(1-&gt;4)-beta-D-glucosyl]n-1 + [(1-&gt;4)-beta-D-glucosyl]m + acceptor + H2O.. Its function is as follows. Lytic polysaccharide monooxygenase (LPMO) that depolymerizes polysaccharides via the oxidation of scissile alpha- or beta-(1-4)-glycosidic bonds, yielding C4 oxidation products. Catalysis by LPMOs requires the reduction of the active-site copper from Cu(II) to Cu(I) by a reducing agent and H(2)O(2) or O(2) as a cosubstrate. Required for the expression of stress response phenotypes, including thermotolerance, cell wall integrity, and efficient cell cycle progression. Promotes intrinsic fungal cell wall remodeling events required for efficient adaptation to the host environment. Required for virulence in a murine inhalational model of cryptococcal infection as well as in Galleria mellonella larvae. The sequence is that of AA9 family lytic polysaccharide monooxygenase CEL1 from Cryptococcus neoformans var. grubii serotype A (strain H99 / ATCC 208821 / CBS 10515 / FGSC 9487) (Filobasidiella neoformans var. grubii).